A 702-amino-acid polypeptide reads, in one-letter code: Ribosomal RNA large subunit methyltransferase K/L (702 aa).

The 112-residue stretch at 43–154 (LIYQSLMWSR…KETASIALDL (112 aa)) folds into the THUMP domain.

This sequence belongs to the methyltransferase superfamily. RlmKL family.

The protein localises to the cytoplasm. The enzyme catalyses guanosine(2445) in 23S rRNA + S-adenosyl-L-methionine = N(2)-methylguanosine(2445) in 23S rRNA + S-adenosyl-L-homocysteine + H(+). It carries out the reaction guanosine(2069) in 23S rRNA + S-adenosyl-L-methionine = N(2)-methylguanosine(2069) in 23S rRNA + S-adenosyl-L-homocysteine + H(+). Specifically methylates the guanine in position 2445 (m2G2445) and the guanine in position 2069 (m7G2069) of 23S rRNA. In Salmonella paratyphi B (strain ATCC BAA-1250 / SPB7), this protein is Ribosomal RNA large subunit methyltransferase K/L.